A 513-amino-acid polypeptide reads, in one-letter code: ATP synthase subunit alpha (513 aa).

Residue G169–T176 participates in ATP binding.

The protein belongs to the ATPase alpha/beta chains family. F-type ATPases have 2 components, CF(1) - the catalytic core - and CF(0) - the membrane proton channel. CF(1) has five subunits: alpha(3), beta(3), gamma(1), delta(1), epsilon(1). CF(0) has three main subunits: a(1), b(2) and c(9-12). The alpha and beta chains form an alternating ring which encloses part of the gamma chain. CF(1) is attached to CF(0) by a central stalk formed by the gamma and epsilon chains, while a peripheral stalk is formed by the delta and b chains.

It is found in the cell inner membrane. It carries out the reaction ATP + H2O + 4 H(+)(in) = ADP + phosphate + 5 H(+)(out). Functionally, produces ATP from ADP in the presence of a proton gradient across the membrane. The alpha chain is a regulatory subunit. The polypeptide is ATP synthase subunit alpha (Vibrio alginolyticus).